The following is a 108-amino-acid chain: U-scoloptoxin(16)-Er10a (108 aa).

The signal sequence occupies residues 1 to 24 (MASFTSFCVLFTFCLLLLAHQARS).

It belongs to the scoloptoxin-16 family. In terms of processing, contains 4 disulfide bonds. In terms of tissue distribution, expressed by the venom gland.

It is found in the secreted. This is U-scoloptoxin(16)-Er10a from Ethmostigmus rubripes (Giant centipede).